The primary structure comprises 300 residues: MTSLSPLLEKFRAHLEDEKGSSPHTVRNYLIDLVDFERYLVERMKLSLLSGTHAAIRGYLGTLSTDHAPASRARRLASIKSFYKYLVRQKLLPASPAKLVKSPKLPKTLPKVLPVEEVFAILDMPDVKTVLGLRDRAILELLYGGGLRISELCGLDLLDIDRSGRIVRVMGKGSKERLVPVNAQSIRALEAYLARRGELLATIRKDQAPEAMFLNFRGGRLTPRSIARHLDTYVLKCALTRKVSPHAMRHSFATHLLGGGADIRSIQELLGHSSLSTTQRYTQVTWEQLQQVYDSAHPRA.

The Core-binding (CB) domain occupies Thr-2–Val-87. The Tyr recombinase domain maps to Thr-108 to Asp-294. Residues Arg-148, Lys-172, His-246, Arg-249, and His-272 contribute to the active site. The active-site O-(3'-phospho-DNA)-tyrosine intermediate is the Tyr-281.

Belongs to the 'phage' integrase family. XerC subfamily. In terms of assembly, forms a cyclic heterotetrameric complex composed of two molecules of XerC and two molecules of XerD.

The protein resides in the cytoplasm. Site-specific tyrosine recombinase, which acts by catalyzing the cutting and rejoining of the recombining DNA molecules. The XerC-XerD complex is essential to convert dimers of the bacterial chromosome into monomers to permit their segregation at cell division. It also contributes to the segregational stability of plasmids. This chain is Tyrosine recombinase XerC, found in Myxococcus xanthus.